Reading from the N-terminus, the 550-residue chain is 4-coumarate--CoA ligase-like 8 (550 aa).

6 residues coordinate ATP: S207, S208, G209, T210, T211, and K215. (E)-4-coumaroyl-AMP is bound at residue F253. R274 provides a ligand contact to CoA. Positions 276–347 (DLGEMMAAVE…KKYPTVDVYQ (72 aa)) are SBD1. (E)-4-coumaroyl-AMP contacts are provided by G325, Q347, G348, and T352. Residues Q347, G348, T352, D430, and R445 each contribute to the ATP site. The interval 348–412 (GYALTESNGA…LKGPSIAKGY (65 aa)) is SBD2. Residues K447 and K451 each contribute to the (E)-4-coumaroyl-AMP site. K453 and G454 together coordinate CoA. K536 contributes to the ATP binding site. A Microbody targeting signal motif is present at residues 548 to 550 (SKI).

The protein belongs to the ATP-dependent AMP-binding enzyme family. It depends on Mg(2+) as a cofactor.

The protein localises to the peroxisome. The catalysed reaction is (E)-4-coumarate + ATP + CoA = (E)-4-coumaroyl-CoA + AMP + diphosphate. It carries out the reaction (E)-4-coumarate + ATP + H(+) = (E)-4-coumaroyl-AMP + diphosphate. It catalyses the reaction (E)-4-coumaroyl-AMP + CoA = (E)-4-coumaroyl-CoA + AMP + H(+). Functionally, carboxylate--CoA ligase that may use 4-coumarate as substrate. Follows a two-step reaction mechanism, wherein the carboxylate substrate first undergoes adenylation by ATP, followed by a thioesterification in the presence of CoA to yield the final CoA thioester. This chain is 4-coumarate--CoA ligase-like 8, found in Arabidopsis thaliana (Mouse-ear cress).